We begin with the raw amino-acid sequence, 388 residues long: Tryptophan synthase beta chain 1 (388 aa).

At Lys-82 the chain carries N6-(pyridoxal phosphate)lysine.

The protein belongs to the TrpB family. Tetramer of two alpha and two beta chains. Pyridoxal 5'-phosphate is required as a cofactor.

The catalysed reaction is (1S,2R)-1-C-(indol-3-yl)glycerol 3-phosphate + L-serine = D-glyceraldehyde 3-phosphate + L-tryptophan + H2O. It functions in the pathway amino-acid biosynthesis; L-tryptophan biosynthesis; L-tryptophan from chorismate: step 5/5. The beta subunit is responsible for the synthesis of L-tryptophan from indole and L-serine. The polypeptide is Tryptophan synthase beta chain 1 (trpB1) (Pyrococcus abyssi (strain GE5 / Orsay)).